A 203-amino-acid chain; its full sequence is Probable chemoreceptor glutamine deamidase CheD (203 aa).

It belongs to the CheD family.

The enzyme catalyses L-glutaminyl-[protein] + H2O = L-glutamyl-[protein] + NH4(+). Probably deamidates glutamine residues to glutamate on methyl-accepting chemotaxis receptors (MCPs), playing an important role in chemotaxis. In Janthinobacterium sp. (strain Marseille) (Minibacterium massiliensis), this protein is Probable chemoreceptor glutamine deamidase CheD.